The chain runs to 167 residues: MVALYCGGGLRPLMLSWSRDLPCIWRALHTSAVCFKNRAARVRVGKGNKPVTYEEAHAPHYIAHRKGWLSLHTGNLDGEDHAAERTVEDVFLRKFMLGTFPGCLADQLILKRRANQVEICALVLRQLPAHKFYFLVGYSETLLSHFYKCPVRLHLQTVPSKVVYKYI.

The transit peptide at 1–35 (MVALYCGGGLRPLMLSWSRDLPCIWRALHTSAVCF) directs the protein to the mitochondrion.

Belongs to the universal ribosomal protein uS3 family. As to quaternary structure, component of the mitochondrial ribosome small subunit (28S) which comprises a 12S rRNA and about 30 distinct proteins.

The protein resides in the mitochondrion. This Bos taurus (Bovine) protein is Small ribosomal subunit protein uS3m (MRPS24).